A 308-amino-acid chain; its full sequence is Malonate utilization transcriptional regulator (308 aa).

Residues 9 to 66 (ITFRKLSVFMMFMAKGNIARTAEAMKLSSVSVHRALHTLEEGVGCPLFVHKGRNLLPL) enclose the HTH lysR-type domain. A DNA-binding region (H-T-H motif) is located at residues 26–45 (IARTAEAMKLSSVSVHRALH).

Belongs to the LysR transcriptional regulatory family.

Its function is as follows. Transcriptional regulator of the mau genes for malonate utilization. The chain is Malonate utilization transcriptional regulator (mauR) from Klebsiella pneumoniae.